The primary structure comprises 343 residues: Plasminogen (343 aa).

2 consecutive Kringle domains span residues 1–17 (APQAPSVENPPEADCML) and 41–120 (AQEP…GCVA). The plasmin heavy chain A stretch occupies residues 1–140 (APQAPSVENP…LRRRSREHFC (140 aa)). Intrachain disulfides connect C15–C94, C36–C77, and C65–C89. One can recognise a Peptidase S1 domain in the interval 114 to 341 (VVGGCVATPH…YVPWIEETMR (228 aa)). Position 130 is a phosphoserine (S130). C140 and C156 are oxidised to a cystine. A plasmin light chain B region spans residues 141–343 (GGTLISPEWV…PWIEETMRRY (203 aa)). Residues H155 and D198 each act as charge relay system in the active site. S221 bears the Phosphoserine mark. Intrachain disulfides connect C232-C299, C262-C278, and C289-C317. S293 (charge relay system) is an active-site residue.

Belongs to the peptidase S1 family. Plasminogen subfamily. In terms of assembly, interacts with CSPG4 and AMOT. Interacts (via the Kringle domains) with HRG; the interaction tethers PLG to the cell surface and enhances its activation. Interacts (via Kringle 4 domain) with ADA; the interaction stimulates PLG activation when in complex with DPP4. Angiostatin: Interacts with ATP5F1A; the interaction inhibits most of the angiogenic effects of angiostatin.

It is found in the secreted. The enzyme catalyses Preferential cleavage: Lys-|-Xaa &gt; Arg-|-Xaa, higher selectivity than trypsin. Converts fibrin into soluble products.. With respect to regulation, converted into plasmin by plasminogen activators, both plasminogen and its activator being bound to fibrin. Cannot be activated with streptokinase. Plasmin dissolves the fibrin of blood clots and acts as a proteolytic factor in a variety of other processes including embryonic development, tissue remodeling, tumor invasion, and inflammation. In ovulation, weakens the walls of the Graafian follicle. It activates the urokinase-type plasminogen activator, collagenases and several complement zymogens, such as C1, C4 and C5. Cleavage of fibronectin and laminin leads to cell detachment and apoptosis. Also cleaves fibrin, thrombospondin and von Willebrand factor. Its role in tissue remodeling and tumor invasion may be modulated by CSPG4. Binds to cells. This chain is Plasminogen (PLG), found in Ovis aries (Sheep).